The primary structure comprises 171 residues: NADH-quinone oxidoreductase subunit I 1 (171 aa).

2 4Fe-4S ferredoxin-type domains span residues 41–71 and 81–110; these read LSRD…LQAT and EFFR…LTPD. The [4Fe-4S] cluster site is built by cysteine 51, cysteine 54, cysteine 57, cysteine 61, cysteine 90, cysteine 93, cysteine 96, and cysteine 100.

This sequence belongs to the complex I 23 kDa subunit family. NDH-1 is composed of 14 different subunits. Subunits NuoA, H, J, K, L, M, N constitute the membrane sector of the complex. It depends on [4Fe-4S] cluster as a cofactor.

It is found in the cell inner membrane. The catalysed reaction is a quinone + NADH + 5 H(+)(in) = a quinol + NAD(+) + 4 H(+)(out). Functionally, NDH-1 shuttles electrons from NADH, via FMN and iron-sulfur (Fe-S) centers, to quinones in the respiratory chain. The immediate electron acceptor for the enzyme in this species is believed to be ubiquinone. Couples the redox reaction to proton translocation (for every two electrons transferred, four hydrogen ions are translocated across the cytoplasmic membrane), and thus conserves the redox energy in a proton gradient. This is NADH-quinone oxidoreductase subunit I 1 from Nitrosospira multiformis (strain ATCC 25196 / NCIMB 11849 / C 71).